Reading from the N-terminus, the 166-residue chain is NADH-quinone oxidoreductase subunit I (166 aa).

4Fe-4S ferredoxin-type domains are found at residues 57–87 (LRRY…IESE) and 97–126 (TRYD…VTPI). Residues Cys67, Cys70, Cys73, Cys77, Cys106, Cys109, Cys112, and Cys116 each coordinate [4Fe-4S] cluster.

The protein belongs to the complex I 23 kDa subunit family. As to quaternary structure, NDH-1 is composed of 14 different subunits. Subunits NuoA, H, J, K, L, M, N constitute the membrane sector of the complex. It depends on [4Fe-4S] cluster as a cofactor.

Its subcellular location is the cell inner membrane. It carries out the reaction a quinone + NADH + 5 H(+)(in) = a quinol + NAD(+) + 4 H(+)(out). NDH-1 shuttles electrons from NADH, via FMN and iron-sulfur (Fe-S) centers, to quinones in the respiratory chain. The immediate electron acceptor for the enzyme in this species is believed to be ubiquinone. Couples the redox reaction to proton translocation (for every two electrons transferred, four hydrogen ions are translocated across the cytoplasmic membrane), and thus conserves the redox energy in a proton gradient. This Legionella pneumophila (strain Lens) protein is NADH-quinone oxidoreductase subunit I.